A 160-amino-acid polypeptide reads, in one-letter code: ATP synthase subunit delta, mitochondrial (160 aa).

A mitochondrion-targeting transit peptide spans 1 to 22; it reads MFRQSLRSIARTRTGTIGVRTY.

F-type ATP synthases have 2 components, the catalytic core F(1) and the membrane-embedded component F(0), linked together by a central stalk and a peripheral stalk. The central stalk, also called rotor shaft, is often seen as part of F(1). The peripheral stalk is seen as part of F(0). F(0) contains the membrane channel next to the rotor. F-type ATP synthases form dimers but each monomer functions independently in ATP generation. The dimer consists of 18 different polypeptides: ATP1 (subunit alpha, part of F(1), 3 molecules per monomer), ATP2 (subunit beta, part of F(1), 3 molecules per monomer), ATP3 (subunit gamma, part of the central stalk), ATP4 (subunit b, part of the peripheral stalk), ATP5/OSCP (subunit 5/OSCP, part of the peripheral stalk), ATP6 (subunit a, part of the peripheral stalk), ATP7 (subunit d, part of the peripheral stalk), ATP8 (subunit 8, part of the peripheral stalk), OLI1 (subunit c, part of the rotor, 10 molecules per monomer), ATP14 (subunit h, part of the peripheral stalk), ATP15 (subunit epsilon, part of the central stalk), ATP16 (subunit delta, part of the central stalk), ATP17 (subunit f, part of the peripheral stalk), ATP18 (subunit i/j, part of the peripheral stalk). Dimer-specific subunits are ATP19 (subunit k, at interface between monomers), ATP20 (subunit g, at interface between monomers), TIM11 (subunit e, at interface between monomers). Also contains subunit L.

Its subcellular location is the mitochondrion inner membrane. Functionally, mitochondrial membrane ATP synthase (F(1)F(0) ATP synthase or Complex V) produces ATP from ADP in the presence of a proton gradient across the membrane which is generated by electron transport complexes of the respiratory chain. F-type ATP synthases consist of two structural domains, F(1) - containing the extramembraneous catalytic core, and F(0) - containing the membrane proton channel, linked together by a central stalk and a peripheral stalk. During catalysis, ATP synthesis in the catalytic domain of F(1) is coupled via a rotary mechanism of the central stalk subunits to proton translocation. Part of the complex F(1) domain and the central stalk which is part of the complex rotary element. Rotation of the central stalk against the surrounding alpha/ATP1(3)beta/ATP2(3) subunits leads to hydrolysis of ATP in three separate catalytic sites on the beta/ATP2 subunits. The polypeptide is ATP synthase subunit delta, mitochondrial (Pichia angusta (Yeast)).